The chain runs to 123 residues: Small ribosomal subunit protein uS12 (123 aa).

Residues 1-21 form a disordered region; sequence MPTIEQLVRKGRQAKPKKSKT. Residues 9 to 20 show a composition bias toward basic residues; that stretch reads RKGRQAKPKKSK. Asp-89 is subject to 3-methylthioaspartic acid.

Belongs to the universal ribosomal protein uS12 family. Part of the 30S ribosomal subunit. Contacts proteins S8 and S17. May interact with IF1 in the 30S initiation complex.

Functionally, with S4 and S5 plays an important role in translational accuracy. In terms of biological role, interacts with and stabilizes bases of the 16S rRNA that are involved in tRNA selection in the A site and with the mRNA backbone. Located at the interface of the 30S and 50S subunits, it traverses the body of the 30S subunit contacting proteins on the other side and probably holding the rRNA structure together. The combined cluster of proteins S8, S12 and S17 appears to hold together the shoulder and platform of the 30S subunit. The polypeptide is Small ribosomal subunit protein uS12 (Bifidobacterium adolescentis (strain ATCC 15703 / DSM 20083 / NCTC 11814 / E194a)).